A 415-amino-acid chain; its full sequence is Polyketide biosynthesis malonyl-ACP decarboxylase PksF (415 aa).

Residues 6–407 (LPEVVVTGVG…GMNTAVCIQN (402 aa)) enclose the Ketosynthase family 3 (KS3) domain.

This sequence belongs to the thiolase-like superfamily. Beta-ketoacyl-ACP synthases family.

The protein localises to the cytoplasm. It catalyses the reaction malonyl-[ACP] + H(+) = acetyl-[ACP] + CO2. It participates in antibiotic biosynthesis; bacillaene biosynthesis. Involved in some intermediate steps for the synthesis of the antibiotic polyketide bacillaene which is involved in secondary metabolism. It decarboxylates selectively the malonyl group attached on the acyl-carrier-protein AcpK (Mal-AcpK). This is Polyketide biosynthesis malonyl-ACP decarboxylase PksF (pksF) from Bacillus subtilis (strain 168).